The chain runs to 205 residues: Thymidylate kinase (205 aa).

7 to 14 (GIDGSGKT) is an ATP binding site.

Belongs to the thymidylate kinase family.

The enzyme catalyses dTMP + ATP = dTDP + ADP. Phosphorylation of dTMP to form dTDP in both de novo and salvage pathways of dTTP synthesis. In Wolbachia sp. subsp. Brugia malayi (strain TRS), this protein is Thymidylate kinase.